The primary structure comprises 1911 residues: Adenylate kinase 9 (1911 aa).

The interval 31–285 (VCFVVFGKPG…LFMIVMDRLK (255 aa)) is adenylate kinase 1. 40–45 (GVGKTT) serves as a coordination point for ATP. The segment at 60–89 (EALPILEEQIAAETESGVMLQSMLISGQSI) is NMP 1. AMP is bound by residues 87 to 89 (QSI) and 116 to 119 (EIPS). Positions 160–205 (GQRQHNNTGYIYSRDQWDPEVIENHRKKKKEAQKDGKGEEEEEEEE) are LID 1. The tract at residues 185–210 (RKKKKEAQKDGKGEEEEEEEEQEEEE) is disordered. The segment covering 197–210 (GEEEEEEEEQEEEE) has biased composition (acidic residues). Arg229 provides a ligand contact to AMP. 2 coiled-coil regions span residues 443–485 (AEAT…EFGV) and 676–711 (LQKKSEIDSKILERLLEELQKKKKEEEEARKATEEE). Disordered regions lie at residues 728–796 (KAKE…TEIP) and 892–926 (DYEEETEDYQTEAEVDEELEEEEEEEGEDKMKERK). Residues 733–750 (EETDNEDEEEIEGDELEV) are compositionally biased toward acidic residues. The span at 751-761 (HEEPEASHDTR) shows a compositional bias: basic and acidic residues. 2 stretches are compositionally biased toward acidic residues: residues 767–791 (EEFEASEVPETEPEAVSEPIEETTV) and 892–919 (DYEEETEDYQTEAEVDEELEEEEEEEGE). Adenylate kinase stretches follow at residues 992–1203 (LRIC…ELIL) and 1412–1601 (IRII…KNVQ). An ATP-binding site is contributed by 1001–1006 (GSGKTM). The interval 1021–1052 (QFEEVLQEKLLLKTEKKVGPEFEEDSENEQAA) is NMP 2. AMP is bound by residues 1050–1052 (QAA) and 1079–1082 (VQLT). Residues 1124–1144 (DGFPRYPEEAQFLGDRGFFPD) form an LID 2 region. An ATP-binding site is contributed by 1421–1426 (KSGKTT). The NMP 3 stretch occupies residues 1441–1472 (SIGGALRYVLNNHPETELALMLNWHLHKGMTA). AMP-binding positions include Arg1447, 1470–1472 (MTA), 1499–1502 (GYPV), Gln1506, and Arg1543. The LID 3 stretch occupies residues 1536–1550 (LEKENEQRLPYPLHN).

Belongs to the adenylate kinase family.

The protein localises to the cytoplasm. Its subcellular location is the nucleus. It localises to the cell projection. It is found in the cilium. The protein resides in the flagellum. It catalyses the reaction a ribonucleoside 5'-phosphate + ATP = a ribonucleoside 5'-diphosphate + ADP. The enzyme catalyses AMP + ATP = 2 ADP. It carries out the reaction GTP + AMP = GDP + ADP. The catalysed reaction is CMP + ATP = CDP + ADP. It catalyses the reaction GTP + CMP = CDP + GDP. The enzyme catalyses dAMP + ATP = dADP + ADP. It carries out the reaction dCMP + ATP = dCDP + ADP. The catalysed reaction is a ribonucleoside 5'-diphosphate + ATP = a ribonucleoside 5'-triphosphate + ADP. It catalyses the reaction CDP + ATP = CTP + ADP. The enzyme catalyses CDP + GTP = CTP + GDP. It carries out the reaction GDP + ATP = GTP + ADP. The catalysed reaction is UDP + ATP = UTP + ADP. It catalyses the reaction GTP + UDP = UTP + GDP. The enzyme catalyses dTDP + GTP = dTTP + GDP. It carries out the reaction dCDP + ATP = dCTP + ADP. The catalysed reaction is dCDP + GTP = dCTP + GDP. It catalyses the reaction dGDP + ATP = dGTP + ADP. The enzyme catalyses dTDP + ATP = dTTP + ADP. It carries out the reaction dADP + GTP = dATP + GDP. In terms of biological role, broad-specificity nucleoside phosphate kinase involved in cellular nucleotide homeostasis by catalyzing nucleoside-phosphate interconversions. Similar to other adenylate kinases, preferentially catalyzes the phosphorylation of the nucleoside monophosphate AMP with ATP as phosphate donor to produce ADP. In vitro, can also catalyze the phosphorylation of CMP, dAMP and dCMP and use GTP as an alternate phosphate donor. Moreover, exhibits a diphosphate kinase activity, producing ATP, CTP, GTP, UTP, TTP, dATP, dCTP and dGTP from the corresponding diphosphate substrates with either ATP or GTP as phosphate donors. For this activity shows the following substrate preference CDP &gt; UDP &gt; ADP &gt; TDP. In Homo sapiens (Human), this protein is Adenylate kinase 9.